A 198-amino-acid chain; its full sequence is uncharacterized protein (198 aa).

The disordered stretch occupies residues 40–111 (GSALPPQAPT…LSRGAGQGAP (72 aa)). Residues 60-74 (SSRTPGPRPPRSTLR) are compositionally biased toward low complexity.

This is an uncharacterized protein from Homo sapiens (Human).